Reading from the N-terminus, the 251-residue chain is Phosphate import ATP-binding protein PstB 2 (251 aa).

Residues 5–246 (LTTENLSLFY…PVKQETNDYI (242 aa)) form the ABC transporter domain. 37 to 44 (GPSGCGKS) serves as a coordination point for ATP.

Belongs to the ABC transporter superfamily. Phosphate importer (TC 3.A.1.7) family. As to quaternary structure, the complex is composed of two ATP-binding proteins (PstB), two transmembrane proteins (PstC and PstA) and a solute-binding protein (PstS).

Its subcellular location is the cell membrane. The enzyme catalyses phosphate(out) + ATP + H2O = ADP + 2 phosphate(in) + H(+). Functionally, part of the ABC transporter complex PstSACB involved in phosphate import. Responsible for energy coupling to the transport system. This chain is Phosphate import ATP-binding protein PstB 2, found in Lactiplantibacillus plantarum (strain ATCC BAA-793 / NCIMB 8826 / WCFS1) (Lactobacillus plantarum).